The primary structure comprises 116 residues: Protein Rev (116 aa).

Residues serine 5 and serine 8 each carry the phosphoserine; by host CK2 modification. The tract at residues 18–26 (LIKFLYQSN) is homomultimerization. A disordered region spans residues 23-49 (YQSNPPPNPEGTRQARRNRRRRWRERQ). The short motif at 34 to 50 (TRQARRNRRRRWRERQR) is the Nuclear localization signal and RNA-binding (RRE) element. Basic residues predominate over residues 36–47 (QARRNRRRRWRE). The short motif at 73 to 84 (LQLPPLERLTLD) is the Nuclear export signal and binding to XPO1 element. A phosphoserine; by host mark is found at serine 92 and serine 99.

Belongs to the HIV-1 REV protein family. Homomultimer; when bound to the RRE. Multimeric assembly is essential for activity and may involve XPO1. Binds to human KPNB1, XPO1, TNPO1, RANBP5 and IPO7. Interacts with the viral Integrase. Interacts with human KHDRBS1. Interacts with human NAP1; this interaction decreases Rev multimerization and stimulates its activity. Interacts with human DEAD-box helicases DDX3 and DDX24; these interactions may serve for viral RNA export to the cytoplasm and packaging, respectively. Interacts with human PSIP1; this interaction may inhibit HIV-1 DNA integration by promoting dissociation of the Integrase-LEDGF/p75 complex. Post-translationally, asymmetrically arginine dimethylated at one site by host PRMT6. Methylation impairs the RNA-binding activity and export of viral RNA from the nucleus to the cytoplasm. Phosphorylated by protein kinase CK2. Presence of, and maybe binding to the N-terminus of the regulatory beta subunit of CK2 is necessary for CK2-mediated Rev's phosphorylation.

The protein localises to the host nucleus. The protein resides in the host nucleolus. It localises to the host cytoplasm. In terms of biological role, escorts unspliced or incompletely spliced viral pre-mRNAs (late transcripts) out of the nucleus of infected cells. These pre-mRNAs carry a recognition sequence called Rev responsive element (RRE) located in the env gene, that is not present in fully spliced viral mRNAs (early transcripts). This function is essential since most viral proteins are translated from unspliced or partially spliced pre-mRNAs which cannot exit the nucleus by the pathway used by fully processed cellular mRNAs. Rev itself is translated from a fully spliced mRNA that readily exits the nucleus. Rev's nuclear localization signal (NLS) binds directly to KPNB1/Importin beta-1 without previous binding to KPNA1/Importin alpha-1. KPNB1 binds to the GDP bound form of RAN (Ran-GDP) and targets Rev to the nucleus. In the nucleus, the conversion from Ran-GDP to Ran-GTP dissociates Rev from KPNB1 and allows Rev's binding to the RRE in viral pre-mRNAs. Rev multimerization on the RRE via cooperative assembly exposes its nuclear export signal (NES) to the surface. Rev can then form a complex with XPO1/CRM1 and Ran-GTP, leading to nuclear export of the complex. Conversion from Ran-GTP to Ran-GDP mediates dissociation of the Rev/RRE/XPO1/RAN complex, so that Rev can return to the nucleus for a subsequent round of export. Beside KPNB1, also seems to interact with TNPO1/Transportin-1, RANBP5/IPO5 and IPO7/RANBP7 for nuclear import. The nucleoporin-like HRB/RIP is an essential cofactor that probably indirectly interacts with Rev to release HIV RNAs from the perinuclear region to the cytoplasm. The protein is Protein Rev of Human immunodeficiency virus type 1 group M subtype B (isolate PCV12) (HIV-1).